The sequence spans 623 residues: Serine/threonine-protein kinase ArnS (623 aa).

2 helical membrane-spanning segments follow: residues 13 to 33 (MILISVFSYVLIALIVLGIVL) and 49 to 69 (VYLIGLTVYLNPGFSLTQSLI). Residues 317–623 (YRVIEVIGLG…SYDIVKILEG (307 aa)) form the Protein kinase domain. ATP-binding positions include 323 to 331 (IGLGGNGYV) and Lys344. The active-site Proton acceptor is Asp460.

Belongs to the protein kinase superfamily. Ser/Thr protein kinase family. Post-translationally, autophosphorylated.

Its subcellular location is the cell membrane. The enzyme catalyses L-seryl-[protein] + ATP = O-phospho-L-seryl-[protein] + ADP + H(+). It catalyses the reaction L-threonyl-[protein] + ATP = O-phospho-L-threonyl-[protein] + ADP + H(+). Autophosphorylation is stimulated by Mn(2+). In terms of biological role, plays an essential role in the controlled expression of archaellum components during starvation-induced motility. May inhibit arnR transcription and promote ArnR translation. The protein is Serine/threonine-protein kinase ArnS of Sulfolobus acidocaldarius (strain ATCC 33909 / DSM 639 / JCM 8929 / NBRC 15157 / NCIMB 11770).